Reading from the N-terminus, the 47-residue chain is Large ribosomal subunit protein bL34 (47 aa).

The protein belongs to the bacterial ribosomal protein bL34 family.

The sequence is that of Large ribosomal subunit protein bL34 from Mycobacterium sp. (strain JLS).